Here is a 126-residue protein sequence, read N- to C-terminus: Glycine cleavage system H protein (126 aa).

The region spanning 22–103 is the Lipoyl-binding domain; sequence KAYIGITDYA…PYGSWMALVE (82 aa). Position 63 is an N6-lipoyllysine (K63).

It belongs to the GcvH family. As to quaternary structure, the glycine cleavage system is composed of four proteins: P, T, L and H. Requires (R)-lipoate as cofactor.

Functionally, the glycine cleavage system catalyzes the degradation of glycine. The H protein shuttles the methylamine group of glycine from the P protein to the T protein. The sequence is that of Glycine cleavage system H protein from Thermoanaerobacter pseudethanolicus (strain ATCC 33223 / 39E) (Clostridium thermohydrosulfuricum).